A 286-amino-acid chain; its full sequence is Bark leucoagglutinin (286 aa).

The first 28 residues, 1 to 28 (ATSNSKPTQVLLATFLTFFFLLLNNVNS), serve as a signal peptide directing secretion. Tyrosine 73 provides a ligand contact to N-acetyl-alpha-neuraminyl-(2-&gt;3)-beta-D-galactosyl-(1-&gt;4)-beta-D-glucose. Asparagine 89 carries N-linked (GlcNAc...) asparagine glycosylation. N-acetyl-alpha-neuraminyl-(2-&gt;3)-beta-D-galactosyl-(1-&gt;4)-beta-D-glucose contacts are provided by aspartate 115 and lysine 135. An N-linked (GlcNAc...) asparagine glycan is attached at asparagine 141. Residues glutamate 155 and aspartate 157 each coordinate Mn(2+). Positions 157, 159, 165, and 168 each coordinate Ca(2+). The N-acetyl-alpha-neuraminyl-(2-&gt;3)-beta-D-galactosyl-(1-&gt;4)-beta-D-glucose site is built by tyrosine 159 and aspartate 165. Aspartate 168 and histidine 173 together coordinate Mn(2+). Asparagine 207 and asparagine 219 each carry an N-linked (GlcNAc...) asparagine glycan. Positions 278–286 (NVHIARYTA) are cleaved as a propeptide — removed in mature form.

It belongs to the leguminous lectin family.

Functionally, sialic acid-binding lectin specifically recognizing the trisaccharide sequence Neu5Ac/Gc-alpha-2,3-Gal-beta-1,4-GlcNAc/Glc. This Maackia amurensis (Amur maackia) protein is Bark leucoagglutinin.